Consider the following 101-residue polypeptide: Iron-sulfur cluster assembly protein CyaY (101 aa).

Belongs to the frataxin family.

Involved in iron-sulfur (Fe-S) cluster assembly. May act as a regulator of Fe-S biogenesis. This chain is Iron-sulfur cluster assembly protein CyaY, found in Haemophilus influenzae (strain PittEE).